Reading from the N-terminus, the 108-residue chain is uncharacterized protein (108 aa).

3 consecutive transmembrane segments (helical) span residues 4–24 (IIFLFRAIWLALSLLILFFSM), 46–66 (GMMVICFPTGIVFFIALIFIG), and 81–101 (IMAIIIWLYFLSGGYIQWFVL).

Its subcellular location is the cell membrane. This is an uncharacterized protein from Escherichia coli O157:H7.